The sequence spans 315 residues: MQAPQPLIIAIVGPTAVGKTAFSLDLAQALNGEIVSVDSRLVYRGMDIGTAKPTPAEQALVKHHLIDVVNPDQEYSLATYQAAAYAAIAQIQQQAKQPILVGGTGQYMAALLEGWSIPEVAPNYELRARYEQQAASEGHAALHQQLQTIDPEAAKAIDPTNVRRVIRALEVFHETGQPISQLQQRNPPHYRILTLDLERPRDELYARIDQRVDLMMREGLIAEVWALIRQGYGWELPSMSGLGYAEFRPLWQGQQSAGACISQLKFNTHRFARKQGAWFRRLPKRVSLDARHTDLLAQVQELLAMPEHAPIHTDH.

13–20 is an ATP binding site; it reads GPTAVGKT. 15–20 provides a ligand contact to substrate; that stretch reads TAVGKT. The segment at 38–41 is interaction with substrate tRNA; the sequence is DSRL.

This sequence belongs to the IPP transferase family. As to quaternary structure, monomer. The cofactor is Mg(2+).

The catalysed reaction is adenosine(37) in tRNA + dimethylallyl diphosphate = N(6)-dimethylallyladenosine(37) in tRNA + diphosphate. In terms of biological role, catalyzes the transfer of a dimethylallyl group onto the adenine at position 37 in tRNAs that read codons beginning with uridine, leading to the formation of N6-(dimethylallyl)adenosine (i(6)A). The protein is tRNA dimethylallyltransferase of Herpetosiphon aurantiacus (strain ATCC 23779 / DSM 785 / 114-95).